The chain runs to 526 residues: Fluoride export protein 1 (526 aa).

Disordered regions lie at residues 1–73 (MMTA…RRAS) and 90–149 (ASNI…KQAG). At 1–159 (MMTAPSDTEG…VVAKRQKVSR (159 aa)) the chain is on the cytoplasmic side. Basic and acidic residues-rich tracts occupy residues 21-36 (SPDR…DHNH) and 103-123 (PITR…YLRE). The chain crosses the membrane as a helical span at residues 160–180 (LATELYTISYLIFFSLLGTLA). Residues 181–194 (RLGLQALTSAYPQS) lie on the Extracellular side of the membrane. Residues 195 to 215 (PIIFPSIWPNFAGCVVMGFLA) traverse the membrane as a helical segment. Over 216–260 (EDRMLFRPDWGQQQPNPKKDDDDDEEAKDIDPAAAKKAHMALKKT) the chain is Cytoplasmic. The interval 223 to 242 (PDWGQQQPNPKKDDDDDEEA) is disordered. Residues 261–281 (IPLYVGLATGFCGSFTSFSSF) traverse the membrane as a helical segment. The Extracellular portion of the chain corresponds to 282–310 (IRDIYLALSNDLAAHGSSAAPVSRNGGYS). A helical transmembrane segment spans residues 311–331 (FMALLAVTITTISLSLSGLFA). Residues 332–361 (GAHLAIAIATLFTRFDLGLPYTFVSRILDR) are Cytoplasmic-facing. Residues 362–382 (LIVLLGFGCWLGAVLLSIWPP) form a helical membrane-spanning segment. The Extracellular portion of the chain corresponds to 383 to 398 (DRHSAQPEKERWRGTA). A helical transmembrane segment spans residues 399-419 (TFALVFAPLGCLTRFYASAHL). Residues 420–424 (NGRLP) lie on the Cytoplasmic side of the membrane. The helical transmembrane segment at 425-445 (SFPLGTFVVNMLGTAVLGMAW) threads the bilayer. Over 446-452 (DLNHVPS) the chain is Extracellular. The chain crosses the membrane as a helical span at residues 453 to 473 (LGGVVGCQVLQGVADGFCGCL). Topologically, residues 474–492 (TTVSTWVSELAALRRRHAY) are cytoplasmic. Residues 493 to 513 (VYGGASVGGGLALMVVVMGSL) form a helical membrane-spanning segment. Residues 514 to 526 (RWTEGFGEVKCIS) are Extracellular-facing.

It belongs to the fluoride channel Fluc/FEX (TC 1.A.43) family.

It localises to the cell membrane. The catalysed reaction is fluoride(in) = fluoride(out). Functionally, fluoride channel required for the rapid expulsion of cytoplasmic fluoride. This chain is Fluoride export protein 1, found in Neurospora crassa (strain ATCC 24698 / 74-OR23-1A / CBS 708.71 / DSM 1257 / FGSC 987).